A 108-amino-acid polypeptide reads, in one-letter code: MNDSQYHQLIDDLLINLEEMLDDVEADIDYESASSILTLIFVNGSKIIINKQPPLHQLWVATKFNGHHFNYQDGLWIDERTGVEFWQFMNDAASKQAEVPVSFPRPTE.

This sequence belongs to the frataxin family.

In terms of biological role, involved in iron-sulfur (Fe-S) cluster assembly. May act as a regulator of Fe-S biogenesis. The chain is Iron-sulfur cluster assembly protein CyaY from Pseudoalteromonas atlantica (strain T6c / ATCC BAA-1087).